The sequence spans 459 residues: Cysteine--tRNA ligase (459 aa).

Position 28 (C28) interacts with Zn(2+). A 'HIGH' region motif is present at residues 30–40 (ITIYDLCHIGH). Residues C209, H234, and E238 each contribute to the Zn(2+) site. A 'KMSKS' region motif is present at residues 266 to 270 (KMSKS). K269 serves as a coordination point for ATP.

This sequence belongs to the class-I aminoacyl-tRNA synthetase family. In terms of assembly, monomer. It depends on Zn(2+) as a cofactor.

It localises to the cytoplasm. The catalysed reaction is tRNA(Cys) + L-cysteine + ATP = L-cysteinyl-tRNA(Cys) + AMP + diphosphate. The polypeptide is Cysteine--tRNA ligase (Shewanella woodyi (strain ATCC 51908 / MS32)).